The sequence spans 391 residues: Formate-dependent phosphoribosylglycinamide formyltransferase (391 aa).

N(1)-(5-phospho-beta-D-ribosyl)glycinamide-binding positions include 20–21 (EL) and Glu-80. ATP contacts are provided by residues Arg-112, Lys-153, 158–163 (SSGKGQ), 193–196 (EGFI), and Glu-201. Residues 117–306 (RLAAETLGLP…EFALHVRAIL (190 aa)) enclose the ATP-grasp domain. 2 residues coordinate Mg(2+): Glu-265 and Glu-277. N(1)-(5-phospho-beta-D-ribosyl)glycinamide contacts are provided by residues Asp-284, Lys-354, and 361–362 (RR).

The protein belongs to the PurK/PurT family. In terms of assembly, homodimer.

It carries out the reaction N(1)-(5-phospho-beta-D-ribosyl)glycinamide + formate + ATP = N(2)-formyl-N(1)-(5-phospho-beta-D-ribosyl)glycinamide + ADP + phosphate + H(+). The protein operates within purine metabolism; IMP biosynthesis via de novo pathway; N(2)-formyl-N(1)-(5-phospho-D-ribosyl)glycinamide from N(1)-(5-phospho-D-ribosyl)glycinamide (formate route): step 1/1. Its function is as follows. Involved in the de novo purine biosynthesis. Catalyzes the transfer of formate to 5-phospho-ribosyl-glycinamide (GAR), producing 5-phospho-ribosyl-N-formylglycinamide (FGAR). Formate is provided by PurU via hydrolysis of 10-formyl-tetrahydrofolate. The protein is Formate-dependent phosphoribosylglycinamide formyltransferase of Shewanella sp. (strain MR-7).